Reading from the N-terminus, the 245-residue chain is Peroxisome biogenesis protein 19-2 (245 aa).

The interval 17-106 is disordered; the sequence is ALDDFKDLNL…LSSKQQPTGS (90 aa). 2 stretches are compositionally biased toward basic and acidic residues: residues 33 to 44 and 71 to 92; these read VKKEEGDKKETE and AKED…ETVK. The segment covering 96-105 has biased composition (polar residues); the sequence is SLSSKQQPTG. Residue C242 is modified to Cysteine methyl ester. C242 carries S-farnesyl cysteine lipidation. Positions 243 to 245 are cleaved as a propeptide — removed in mature form; sequence CVM.

It belongs to the peroxin-19 family. Dimer. Interacts with PEX10 (via C-terminus). May be farnesylated. In terms of tissue distribution, expressed in roots, leaves, flowers, siliques and stems. Highest expression in roots and leaves.

Its subcellular location is the cytoplasm. The protein localises to the peroxisome membrane. In terms of biological role, contributes to morphology determination of peroxisomes, but not to import of peroxisomal matrix proteins. Required for proper post-translational import and stabilization of peroxisomal membrane proteins (PMPs). Acts as a cytosolic import receptor for PMPs and delivers them to the docking factor PEX3 at the peroxisomal membrane for subsequent insertion into the membrane. Acts as a chaperone in stabilizing or maintaining PMPs in the lipid bilayer. In Arabidopsis thaliana (Mouse-ear cress), this protein is Peroxisome biogenesis protein 19-2 (PEX19-2).